We begin with the raw amino-acid sequence, 217 residues long: Cytidylate kinase (217 aa).

Residue 9 to 17 (GPAASGKSS) participates in ATP binding.

It belongs to the cytidylate kinase family. Type 1 subfamily.

Its subcellular location is the cytoplasm. The enzyme catalyses CMP + ATP = CDP + ADP. It catalyses the reaction dCMP + ATP = dCDP + ADP. This chain is Cytidylate kinase, found in Bdellovibrio bacteriovorus (strain ATCC 15356 / DSM 50701 / NCIMB 9529 / HD100).